The following is a 916-amino-acid chain: MAYHGSGPQSPGEHTYDDGHQLRDLSHSNTSYEEEASHGLLSSQQSPFAGPFDDPHQQRGLTASPVQRPTSGYSLTESYAPDAAYHDPYSANQSVYSGHSENPAAAFGVPGRVASPYARSETSSTEAWRQRQAGAAGGGNGLRRYATRKVKLVQGSVLSVDYPVPSAIQNAIQAKYRNDLEGGSEEFTHMRYTAATCDPNEFTLHNGYNLRPAMYNRHTELLIAITYYNEDKTLTARTLHGVMQNIRDIVNLKKSEFWNKGGPAWQKIVVCLVFDGIDPCDKDTLDVLATVGIYQDGVMKRDVDGKETVAHIFEYTTQLSVTPNQQLIRPTDDGPSTLPPVQMMFCLKQKNSKKINSHRWLFNAFGRILNPEVCILLDAGTKPGPKSLLYLWEAFYNDKDLGGACGEIHAMLGKGWKKLLNPLVAAQNFEYKISNILDKPLESSFGYVSVLPGAFSAYRFRAIMGRPLEQYFHGDHTLSKQLGKKGIEGMNIFKKNMFLAEDRILCFELVAKAGSKWHLSYVKASKGETDVPEGAPEFISQRRRWLNGSFAAGIYSLMHFGRMYKSGHNIVRMFFLHLQMLYNWFSTFLTWFSLASYWLTTSVIMDLVGTPSSSNGYTAFPFGKTATPIINTLVKYIYLAFLLLQFILALGNRPKGSKLSYLASFVAFGIIQLYVVVDALYLVVRAFTGGAPMDFNTDDGIGAFLSSFFGSSGAGIIIIALAATFGLYFVASFMYLDPWHMFTSFPAYMAVQSSYINILNVYAFSNWHDVSWGTKGSDKADALPSAKTTGGKGEEAVIEEIDKPQADIDSQFEATVKRALTPYVPPEEKEEKSLDDSYKSFRTRLVTLWLFSNGLLAVCITSEGLDKFGFTNTSTERTSRFFQALLWSNAVVALIRFIGATWFLGKTGLLCCFARR.

2 disordered regions span residues 1–75 (MAYH…GYSL) and 118–141 (ARSE…GGNG). The span at 14–26 (HTYDDGHQLRDLS) shows a compositional bias: basic and acidic residues. The segment covering 59–75 (RGLTASPVQRPTSGYSL) has biased composition (polar residues). 7 helical membrane passes run 544-561 (RWLN…MHFG), 588-608 (FLTW…MDLV), 629-649 (IINT…FILA), 664-684 (SFVA…YLVV), 716-736 (IIII…FMYL), 845-865 (LVTL…SEGL), and 884-904 (ALLW…TWFL).

It belongs to the chitin synthase family. Class III subfamily. As to quaternary structure, interacts with kibesin kinA. In terms of processing, activity requires trypsin activation, suggesting a zymogenic nature. Post-translationally, phosphorylated at yet unidentified residues in a N-terminal disordered region-dependent manner.

Its subcellular location is the cell membrane. The protein localises to the cell tip. It is found in the cell septum. It carries out the reaction [(1-&gt;4)-N-acetyl-beta-D-glucosaminyl](n) + UDP-N-acetyl-alpha-D-glucosamine = [(1-&gt;4)-N-acetyl-beta-D-glucosaminyl](n+1) + UDP + H(+). With respect to regulation, activity is stimulated by Mg(2+) and is inhibited by polyoxin D. Polymerizes chitin, a structural polymer of the cell wall and septum, by transferring the sugar moiety of UDP-GlcNAc to the non-reducing end of the growing chitin polymer. Does not substantially contribute to the rigidity of the cell wall but is necessary for normal hyphal growth and organization. In addition to its functions in the formation of normal cell walls of hyphae, is also involved in conidiophore and conidia development. The sequence is that of Chitin synthase B from Emericella nidulans (strain FGSC A4 / ATCC 38163 / CBS 112.46 / NRRL 194 / M139) (Aspergillus nidulans).